Consider the following 335-residue polypeptide: Protein-arginine kinase (335 aa).

The Phosphagen kinase C-terminal domain occupies 21–244; it reads IVMSSRIRLA…NQIIHEEKQI (224 aa). Residues 24 to 28, His-82, Arg-115, 166 to 170, and 197 to 202 contribute to the ATP site; these read SSRIR, RASVM, and RGIYGE.

The protein belongs to the ATP:guanido phosphotransferase family.

The catalysed reaction is L-arginyl-[protein] + ATP = N(omega)-phospho-L-arginyl-[protein] + ADP + H(+). Catalyzes the specific phosphorylation of arginine residues in proteins. The sequence is that of Protein-arginine kinase from Staphylococcus aureus (strain USA300).